Here is a 127-residue protein sequence, read N- to C-terminus: DNA-directed RNA polymerase subunit omega (127 aa).

This sequence belongs to the RNA polymerase subunit omega family. In terms of assembly, the RNAP catalytic core consists of 2 alpha, 1 beta, 1 beta' and 1 omega subunit. When a sigma factor is associated with the core the holoenzyme is formed, which can initiate transcription.

The catalysed reaction is RNA(n) + a ribonucleoside 5'-triphosphate = RNA(n+1) + diphosphate. In terms of biological role, promotes RNA polymerase assembly. Latches the N- and C-terminal regions of the beta' subunit thereby facilitating its interaction with the beta and alpha subunits. In Rickettsia rickettsii (strain Iowa), this protein is DNA-directed RNA polymerase subunit omega.